We begin with the raw amino-acid sequence, 209 residues long: Glutathione S-transferase 1-1 (209 aa).

Residues 1–81 (MADFYYLPGS…YLVEKYGKTD (81 aa)) form the GST N-terminal domain. Glutathione-binding positions include Ser10, 51-53 (HTI), and 65-67 (ESR). Positions 87–209 (CPKKRAVINQ…GCLEFKKFFE (123 aa)) constitute a GST C-terminal domain.

The protein belongs to the GST superfamily. Theta family. In terms of assembly, homodimer.

It catalyses the reaction RX + glutathione = an S-substituted glutathione + a halide anion + H(+). The catalysed reaction is 1,1,1-trichloro-2,2-bis(4-chlorophenyl)ethane = 1,1-dichloro-2,2-bis(4-chlorophenyl)ethylene + chloride + H(+). In terms of biological role, conjugation of reduced glutathione to a wide number of exogenous and endogenous hydrophobic electrophiles. Has DDT dehydrochlorinase activity. The sequence is that of Glutathione S-transferase 1-1 (GstD1) from Drosophila sechellia (Fruit fly).